The chain runs to 244 residues: Tetraspanin-7 (244 aa).

Over 1 to 11 the chain is Cytoplasmic; sequence METKPVITCLK. Residues 12–35 traverse the membrane as a helical segment; it reads TLLIIYSFVFWITGVILLAVGVWG. Residues 36–51 lie on the Extracellular side of the membrane; the sequence is KLTLGTYISLIAENST. An N-linked (GlcNAc...) asparagine glycan is attached at asparagine 49. The helical transmembrane segment at 52–70 threads the bilayer; the sequence is NAPYVLIGTGTTIVVFGLF. The Cytoplasmic portion of the chain corresponds to 71-81; the sequence is GCFATCRGSPW. The helical transmembrane segment at 82-107 threads the bilayer; sequence MLKLYAMFLSLVFLAELVAGISGFVF. Over 108–208 the chain is Extracellular; it reads RHEIKDTFLR…LVTSFMETNM (101 aa). N-linked (GlcNAc...) asparagine glycosylation is found at asparagine 150, asparagine 153, asparagine 172, and asparagine 183. Residues 209–229 form a helical membrane-spanning segment; it reads GIIAGVAFGIAFSQLIGMLLA. At 230 to 244 the chain is on the cytoplasmic side; it reads CCLSRFITANQYEMV.

This sequence belongs to the tetraspanin (TM4SF) family.

The protein localises to the membrane. Its function is as follows. May be involved in cell proliferation and cell motility. This Pongo pygmaeus (Bornean orangutan) protein is Tetraspanin-7 (TSPAN7).